An 809-amino-acid chain; its full sequence is BTB/POZ domain-containing protein At2g30600 (809 aa).

BTB domains are found at residues 211–273 and 351–420; these read SDTV…QILE and SDIK…NMED. Residues 466 to 537 form the BACK domain; the sequence is VVSSISSCKL…LMWCMKAEES (72 aa).

It participates in protein modification; protein ubiquitination. Functionally, may act as a substrate-specific adapter of an E3 ubiquitin-protein ligase complex (CUL3-RBX1-BTB) which mediates the ubiquitination and subsequent proteasomal degradation of target proteins. This Arabidopsis thaliana (Mouse-ear cress) protein is BTB/POZ domain-containing protein At2g30600.